A 118-amino-acid chain; its full sequence is Large ribosomal subunit protein uL24 (118 aa).

The protein belongs to the universal ribosomal protein uL24 family. In terms of assembly, part of the 50S ribosomal subunit.

One of two assembly initiator proteins, it binds directly to the 5'-end of the 23S rRNA, where it nucleates assembly of the 50S subunit. Functionally, one of the proteins that surrounds the polypeptide exit tunnel on the outside of the subunit. This is Large ribosomal subunit protein uL24 from Prochlorococcus marinus (strain NATL2A).